The sequence spans 341 residues: Processive diacylglycerol beta-glycosyltransferase (341 aa).

Belongs to the glycosyltransferase 2 family. Mg(2+) serves as cofactor.

The protein resides in the cell membrane. The enzyme catalyses a 1,2-diacyl-sn-glycerol + UDP-alpha-D-glucose = a 1,2-diacyl-3-O-(beta-D-glucopyranosyl)-sn-glycerol + UDP + H(+). It carries out the reaction a 1,2-diacyl-sn-glycerol + UDP-alpha-D-galactose = a 1,2-diacyl-3-O-(beta-D-galactosyl)-sn-glycerol + UDP + H(+). It catalyses the reaction a 1,2-diacyl-3-O-(beta-D-glucopyranosyl)-sn-glycerol + UDP-alpha-D-glucose = a 1,2-diacyl-3-O-(beta-D-Glc-(1-&gt;6)-beta-D-Glc)-sn-glycerol + UDP + H(+). The catalysed reaction is a 1,2-diacyl-3-O-(beta-D-galactosyl)-sn-glycerol + UDP-alpha-D-galactose = a 1,2-diacyl-3-O-[beta-D-galactosyl-(1-&gt;6)-beta-D-galactosyl]-sn-glycerol + UDP + H(+). It participates in glycolipid metabolism; diglucosyl-diacylglycerol biosynthesis. Activated by the negatively charged lipid dioleoylphosphatidylglycerol (DOPG) and inhibited by N-(n-nonyl)deoxygalactonojirimycin (C9J). Its function is as follows. Processive glycosyltransferase involved in the biosynthesis of both the non-bilayer-prone beta-monoglycosyldiacylglycerol and the bilayer-forming membrane lipid beta-diglycosyldiacylglycerol. These components contribute to regulate the properties and stability of the membrane. Catalyzes sequentially the transfers of glucosyl or galactosyl residues from UDP-Glc or UDP-Gal to diacylglycerol (DAG) acceptor to form the corresponding beta-glycosyl-DAG (3-O-(beta-D-glycopyranosyl)-1,2-diacyl-sn-glycerol), which then acts as acceptor to give beta-diglycosyl-DAG product (3-O-(beta-D-glycopyranosyl-beta-(1-&gt;6)-D-glycopyranosyl)-1,2-diacyl-sn-glycerol). Dioleoylglycerol (DOG) is a preferred sugar acceptor than 3-O-(beta-D-glucopyranosyl)-1,2-dioleoyl-sn-glycerol. This is Processive diacylglycerol beta-glycosyltransferase from Mycoplasma genitalium (strain ATCC 33530 / DSM 19775 / NCTC 10195 / G37) (Mycoplasmoides genitalium).